The chain runs to 156 residues: Protein-export protein SecB (156 aa).

This sequence belongs to the SecB family. Homotetramer, a dimer of dimers. One homotetramer interacts with 1 SecA dimer.

The protein localises to the cytoplasm. One of the proteins required for the normal export of preproteins out of the cell cytoplasm. It is a molecular chaperone that binds to a subset of precursor proteins, maintaining them in a translocation-competent state. It also specifically binds to its receptor SecA. In Xanthobacter autotrophicus (strain ATCC BAA-1158 / Py2), this protein is Protein-export protein SecB.